The following is a 630-amino-acid chain: ATP-dependent zinc metalloprotease FtsH 2 (630 aa).

Residues 1–8 (MNNNPNRR) lie on the Cytoplasmic side of the membrane. A helical transmembrane segment spans residues 9 to 29 (GSLIGPLFIYFILAMLIFMSI). Over 30 to 110 (SQLNTSNITE…YIQNTGASWW (81 aa)) the chain is Periplasmic. The chain crosses the membrane as a helical span at residues 111-131 (VTMLIYMLPLIILMFFWFWMF). The Cytoplasmic portion of the chain corresponds to 132-630 (RRSGTGEGIP…KETNLFVSYA (499 aa)). 203–210 (GPPGTGKT) is a binding site for ATP. His425 provides a ligand contact to Zn(2+). Glu426 is an active-site residue. Zn(2+) is bound by residues His429 and Asp502.

This sequence in the central section; belongs to the AAA ATPase family. The protein in the C-terminal section; belongs to the peptidase M41 family. Homohexamer. Zn(2+) is required as a cofactor.

The protein resides in the cell inner membrane. Acts as a processive, ATP-dependent zinc metallopeptidase for both cytoplasmic and membrane proteins. Plays a role in the quality control of integral membrane proteins. The chain is ATP-dependent zinc metalloprotease FtsH 2 from Petrotoga mobilis (strain DSM 10674 / SJ95).